We begin with the raw amino-acid sequence, 175 residues long: DASH complex subunit DAM1 (175 aa).

The tract at residues 1-39 is disordered; that stretch reads MAPEDTNPQSSHRRTRSTSRSRPTTPLRPSSRSSFRSSA. A compositionally biased stretch (low complexity) spans 20–39; sequence RSRPTTPLRPSSRSSFRSSA.

It belongs to the DASH complex DAM1 family. In terms of assembly, component of the DASH complex consisting of ASK1, DAD1, DAD2, DAD3, DAD4, DAM1, DUO1, HSK3, SPC19 and SPC34, with a stoichiometry of one copy of each subunit per complex. Multiple DASH complexes oligomerize to form a ring that encircles spindle microtubules and organizes the rod-like NDC80 complexes of the outer kinetochore. DASH complex oligomerization strengthens microtubule attachments. On cytoplasmic microtubules, DASH complexes appear to form patches instead of rings.

The protein resides in the chromosome. It localises to the centromere. The protein localises to the kinetochore. Its subcellular location is the cytoplasm. It is found in the cytoskeleton. The protein resides in the spindle. It localises to the nucleus. Functionally, component of the DASH complex that connects microtubules with kinetochores and couples microtubule depolymerisation to chromosome movement; it is involved in retrieving kinetochores to the spindle poles before their re-orientation on the spindle in early mitosis and allows microtubule depolymerization to pull chromosomes apart and resist detachment during anaphase. Kinetochores, consisting of a centromere-associated inner segment and a microtubule-contacting outer segment, play a crucial role in chromosome segregation by mediating the physical connection between centromeric DNA and microtubules. Kinetochores also serve as an input point for the spindle assembly checkpoint, which delays anaphase until all chromosomes have bioriented on the mitotic spindle. The polypeptide is DASH complex subunit DAM1 (Chaetomium thermophilum (strain DSM 1495 / CBS 144.50 / IMI 039719) (Thermochaetoides thermophila)).